The primary structure comprises 342 residues: Protein RecA (342 aa).

65-72 (GPESSGKT) lines the ATP pocket.

This sequence belongs to the RecA family.

The protein localises to the cytoplasm. Can catalyze the hydrolysis of ATP in the presence of single-stranded DNA, the ATP-dependent uptake of single-stranded DNA by duplex DNA, and the ATP-dependent hybridization of homologous single-stranded DNAs. It interacts with LexA causing its activation and leading to its autocatalytic cleavage. This is Protein RecA from Caldanaerobacter subterraneus subsp. tengcongensis (strain DSM 15242 / JCM 11007 / NBRC 100824 / MB4) (Thermoanaerobacter tengcongensis).